Reading from the N-terminus, the 157-residue chain is MNLTHLDEQNKPKMVDVSDKDNTTRIATASGIIEVGQAAFDAVIANTAKKGPVLQTAVIAAIQGTKQTSTLIPMCHPLMLTSVKTDIEELPELPGFKLTVTAKLTGQTGVEMEALTGVSVGLLTIYDMLKAIDKGMVIRNVQLEHKSGGNSGDFNRA.

Residues 74–76 (MCH) and 112–113 (ME) each bind substrate. The active site involves D127.

This sequence belongs to the MoaC family. In terms of assembly, homohexamer; trimer of dimers.

The enzyme catalyses (8S)-3',8-cyclo-7,8-dihydroguanosine 5'-triphosphate = cyclic pyranopterin phosphate + diphosphate. The protein operates within cofactor biosynthesis; molybdopterin biosynthesis. Catalyzes the conversion of (8S)-3',8-cyclo-7,8-dihydroguanosine 5'-triphosphate to cyclic pyranopterin monophosphate (cPMP). This Sulfurovum sp. (strain NBC37-1) protein is Cyclic pyranopterin monophosphate synthase.